The primary structure comprises 540 residues: Solute carrier family 22 member 7 (540 aa).

12 consecutive transmembrane segments (helical) span residues 21-41, 144-164, 172-192, 202-222, 232-252, 257-277, 344-364, 378-398, 402-422, 429-449, 462-484, and 488-510; these read LVLL…PIFM, VTST…GYLS, LLLV…ASVN, LTGS…LEWL, VIST…GYLI, WLLL…WWVP, VSLC…GLTL, LLFG…VRLV, LTEA…LLVS, ITAL…TAYL, TGMG…VVLL, and WLLL…VLLL.

The protein belongs to the major facilitator (TC 2.A.1) superfamily. Organic cation transporter (TC 2.A.1.19) family. In terms of tissue distribution, abundant expression in male and female kidney. In kidney, expressed at the brush border of the proximal tubule S3 segment (S3) in the outer stripe and medullary rays. In kidney, expression is higher in female than male. Also expressed in female liver.

It is found in the basolateral cell membrane. The protein resides in the apical cell membrane. It localises to the cell membrane. The enzyme catalyses orotate(out) + L-glutamate(in) = orotate(in) + L-glutamate(out). It carries out the reaction 3',5'-cyclic GMP(in) = 3',5'-cyclic GMP(out). It catalyses the reaction GMP(in) = GMP(out). The catalysed reaction is 2'-deoxyguanosine(in) = 2'-deoxyguanosine(out). The enzyme catalyses GDP(in) = GDP(out). It carries out the reaction guanosine(in) = guanosine(out). It catalyses the reaction GTP(in) = GTP(out). The catalysed reaction is 3',5'-cyclic AMP(in) = 3',5'-cyclic AMP(out). The enzyme catalyses creatinine(in) = creatinine(out). It carries out the reaction prostaglandin E2(out) = prostaglandin E2(in). It catalyses the reaction 2-oxoglutarate(in) = 2-oxoglutarate(out). The catalysed reaction is glutarate(in) = glutarate(out). The enzyme catalyses urate(out) = urate(in). It carries out the reaction estrone 3-sulfate(out) = estrone 3-sulfate(in). Functions as a Na(+)-independent bidirectional multispecific transporter. Contributes to the renal and hepatic elimination of endogenous organic compounds from the systemic circulation into the urine and bile, respectively. Capable of transporting a wide range of purine and pyrimidine nucleobases, nucleosides, and nucleotides with cGMP, 2'deoxyguanosine and GMP being the preferred substrates. Functions as a pH- and chloride-independent cGMP bidirectional facilitative transporter that can regulate both intracellular and extracellular levels of cGMP and may be involved in cGMP signaling pathways. Mediates orotate/glutamate bidirectional exchange and most likely display a physiological role in hepatic release of glutamate into the blood. Involved in renal secretion and possible reabsorption of creatinine. Able to uptake prostaglandin E2 (PGE2) and may contribute to PGE2 renal excretion. Also transports alpha-ketoglutarate and urate. Unlike human hortolog, able to transport glutarate. Apart from the orotate/glutamate exchange, the counterions for the uptake of other SLC22A7/OAT2 substrates remain to be identified. The sequence is that of Solute carrier family 22 member 7 from Mus musculus (Mouse).